Reading from the N-terminus, the 322-residue chain is Putative UDP-N-acetylglucosamine--dolichyl-phosphate N-acetylglucosaminephosphotransferase (322 aa).

9 helical membrane-spanning segments follow: residues 5–25, 46–66, 76–96, 102–122, 123–143, 160–180, 186–206, 222–242, and 295–315; these read AILL…VWVI, IPLL…FSLL, IPAV…DDIF, VRAF…VGHS, IISI…IIII, LNGL…YIGL, TYQA…FLIF, FIGA…ALAI, and YQVV…AVIL.

Belongs to the glycosyltransferase 4 family.

It is found in the cell membrane. The catalysed reaction is a di-trans,poly-cis-dolichyl phosphate + UDP-N-acetyl-alpha-D-glucosamine = an N-acetyl-alpha-D-glucosaminyl-diphospho-di-trans,poly-cis-dolichol + UMP. Inhibited by tunicamycin. The protein is Putative UDP-N-acetylglucosamine--dolichyl-phosphate N-acetylglucosaminephosphotransferase (gnpTA) of Saccharolobus solfataricus (strain ATCC 35092 / DSM 1617 / JCM 11322 / P2) (Sulfolobus solfataricus).